Here is a 657-residue protein sequence, read N- to C-terminus: Putative serine protease (657 aa).

3 consecutive transmembrane segments (helical) span residues 4–24 (YLAT…LLMP), 46–62 (WLLT…PSGT), and 109–131 (LLSG…VLML). A Peptidase S39 domain is found at 239-434 (QPGSDFVECE…ETDRYARTME (196 aa)). Active-site for protease activity residues include histidine 284, aspartate 318, and serine 386. Residues 513-605 (PLGGLPISNG…PPSTGSVPKS (93 aa)) are disordered. Over residues 548 to 559 (HTRRRRRNKKKS) the composition is skewed to basic residues. Residues 560-569 (KNSETGHGPE) show a composition bias toward basic and acidic residues. Positions 571 to 589 (QSQQQSRPSSPIPDDSAPV) are enriched in low complexity.

It belongs to the peptidase S39B family.

It is found in the host membrane. Functionally, putative serine protease. The protein is Putative serine protease of Mushroom bacilliform virus (isolate Australia/AUS LF-1) (MBV).